We begin with the raw amino-acid sequence, 236 residues long: 5'-methylthioadenosine/S-adenosylhomocysteine nucleosidase (236 aa).

Glu12 serves as the catalytic Proton acceptor. Residues Gly78, Ile153, and Met174–Glu175 each bind substrate. Asp198 functions as the Proton donor in the catalytic mechanism.

Belongs to the PNP/UDP phosphorylase family. MtnN subfamily.

The catalysed reaction is S-adenosyl-L-homocysteine + H2O = S-(5-deoxy-D-ribos-5-yl)-L-homocysteine + adenine. The enzyme catalyses S-methyl-5'-thioadenosine + H2O = 5-(methylsulfanyl)-D-ribose + adenine. It catalyses the reaction 5'-deoxyadenosine + H2O = 5-deoxy-D-ribose + adenine. It participates in amino-acid biosynthesis; L-methionine biosynthesis via salvage pathway; S-methyl-5-thio-alpha-D-ribose 1-phosphate from S-methyl-5'-thioadenosine (hydrolase route): step 1/2. Catalyzes the irreversible cleavage of the glycosidic bond in both 5'-methylthioadenosine (MTA) and S-adenosylhomocysteine (SAH/AdoHcy) to adenine and the corresponding thioribose, 5'-methylthioribose and S-ribosylhomocysteine, respectively. Also cleaves 5'-deoxyadenosine, a toxic by-product of radical S-adenosylmethionine (SAM) enzymes, into 5-deoxyribose and adenine. In Shewanella baltica (strain OS185), this protein is 5'-methylthioadenosine/S-adenosylhomocysteine nucleosidase.